The chain runs to 977 residues: Kinesin-like protein KIN-14D (977 aa).

A compositionally biased stretch (low complexity) spans methionine 1–serine 13. The disordered stretch occupies residues methionine 1 to arginine 20. Positions serine 17–glycine 118 constitute a Calponin-homology (CH) domain. Residues lysine 297 to leucine 384 adopt a coiled-coil conformation. In terms of domain architecture, Kinesin motor spans asparagine 472–valine 800. Glycine 556 to threonine 563 is a binding site for ATP. The stretch at lysine 812–serine 847 forms a coiled coil. A disordered region spans residues proline 852–proline 977. 2 stretches are compositionally biased toward polar residues: residues lysine 861–glycine 879 and arginine 956–proline 977.

The protein belongs to the TRAFAC class myosin-kinesin ATPase superfamily. Kinesin family. KIN-14 subfamily.

The protein is Kinesin-like protein KIN-14D of Oryza sativa subsp. japonica (Rice).